A 444-amino-acid polypeptide reads, in one-letter code: C4-dicarboxylate transport protein (444 aa).

8 helical membrane-spanning segments follow: residues 7–29, 44–66, 79–101, 143–165, 186–208, 221–243, 291–313, and 353–375; these read LYKS…GHFY, IKLI…IAGM, ALLY…VNVV, IVGA…FGFA, VMFN…AMAF, LGQL…LGAI, VVGL…YLTM, and FIVL…ALIL. Residues 418–444 form a disordered region; that stretch reads SGGRAISDTREEDDLGVAEGPTPTTVK.

The protein belongs to the dicarboxylate/amino acid:cation symporter (DAACS) (TC 2.A.23) family.

Its subcellular location is the cell inner membrane. Functionally, responsible for the transport of dicarboxylates such as succinate, fumarate, and malate from the periplasm across the inner membrane. The polypeptide is C4-dicarboxylate transport protein (Pseudomonas chlororaphis (Pseudomonas aureofaciens)).